The sequence spans 574 residues: Septation ring formation regulator EzrA (574 aa).

Topologically, residues 1-7 (MSSGIIL) are extracellular. Residues 8-26 (LIVAIVLLVIIAYLIGVII) traverse the membrane as a helical segment. Over 27 to 574 (RKRNDSMIGT…YERTREHIRF (548 aa)) the chain is Cytoplasmic. Coiled coils occupy residues 102-140 (NFIRAKHEINNVESQLNLVEEDITSIREALSILKEQEEK), 243-379 (RRLL…GQEI), and 459-520 (QLEA…SFEA).

This sequence belongs to the EzrA family.

It localises to the cell membrane. In terms of biological role, negative regulator of FtsZ ring formation; modulates the frequency and position of FtsZ ring formation. Inhibits FtsZ ring formation at polar sites. Interacts either with FtsZ or with one of its binding partners to promote depolymerization. The chain is Septation ring formation regulator EzrA from Streptococcus uberis (strain ATCC BAA-854 / 0140J).